A 455-amino-acid polypeptide reads, in one-letter code: tRNA modification GTPase MnmE (455 aa).

(6S)-5-formyl-5,6,7,8-tetrahydrofolate contacts are provided by Arg24, Glu81, and Lys120. One can recognise a TrmE-type G domain in the interval 216–378; that stretch reads GMTVVIAGRP…LREHLKHCMG (163 aa). Position 226 (Asn226) interacts with K(+). Residues 226–231, 245–251, 270–273, and 335–338 contribute to the GTP site; these read NAGKSS, TDIAGTT, DTAG, and NKAD. Ser230 serves as a coordination point for Mg(2+). Residues Thr245, Ile247, and Thr250 each contribute to the K(+) site. Mg(2+) is bound at residue Thr251. Residue Lys455 coordinates (6S)-5-formyl-5,6,7,8-tetrahydrofolate.

It belongs to the TRAFAC class TrmE-Era-EngA-EngB-Septin-like GTPase superfamily. TrmE GTPase family. In terms of assembly, homodimer. Heterotetramer of two MnmE and two MnmG subunits. K(+) is required as a cofactor.

Its subcellular location is the cytoplasm. Functionally, exhibits a very high intrinsic GTPase hydrolysis rate. Involved in the addition of a carboxymethylaminomethyl (cmnm) group at the wobble position (U34) of certain tRNAs, forming tRNA-cmnm(5)s(2)U34. The protein is tRNA modification GTPase MnmE of Stutzerimonas stutzeri (strain A1501) (Pseudomonas stutzeri).